The following is a 164-amino-acid chain: Photosystem II extrinsic protein V (164 aa).

An N-terminal signal peptide occupies residues 1–27 (MNRISIYRIKVLAFLFAVSTYVYPASS). 4 residues coordinate heme c: Cys64, Cys67, His68, and His119.

This sequence belongs to the cytochrome c family. PsbV subfamily. As to quaternary structure, PSII is composed of 1 copy each of membrane proteins PsbA, PsbB, PsbC, PsbD, PsbE, PsbF, PsbH, PsbI, PsbJ, PsbK, PsbL, PsbM, PsbT, PsbY, PsbZ, Psb30/Ycf12, at least 3 peripheral proteins of the oxygen-evolving complex and a large number of cofactors. It forms dimeric complexes. The extrinsic subunits in red algae are PsbO (OEC33), PsbQ', cytochrome c-550 and PsbU. It depends on heme c as a cofactor.

It is found in the plastid. Its subcellular location is the chloroplast thylakoid membrane. Its function is as follows. One of the extrinsic, lumenal subunits of photosystem II (PSII). PSII is a light-driven water plastoquinone oxidoreductase, using light energy to abstract electrons from H(2)O, generating a proton gradient subsequently used for ATP formation. The extrinsic proteins stabilize the structure of photosystem II oxygen-evolving complex (OEC), the ion environment of oxygen evolution and protect the OEC against heat-induced inactivation. This is Photosystem II extrinsic protein V from Cyanidium caldarium (Red alga).